The sequence spans 354 residues: Uroporphyrinogen decarboxylase (354 aa).

Residues Arg-35–Arg-39, Asp-84, Tyr-159, Ser-214, and His-333 contribute to the substrate site.

This sequence belongs to the uroporphyrinogen decarboxylase family. In terms of assembly, homodimer.

Its subcellular location is the cytoplasm. The enzyme catalyses uroporphyrinogen III + 4 H(+) = coproporphyrinogen III + 4 CO2. It functions in the pathway porphyrin-containing compound metabolism; protoporphyrin-IX biosynthesis; coproporphyrinogen-III from 5-aminolevulinate: step 4/4. Catalyzes the decarboxylation of four acetate groups of uroporphyrinogen-III to yield coproporphyrinogen-III. The polypeptide is Uroporphyrinogen decarboxylase (Nocardia farcinica (strain IFM 10152)).